Here is a 760-residue protein sequence, read N- to C-terminus: Cellulose synthase-like protein G1 (760 aa).

The next 2 membrane-spanning stretches (helical) occupy residues 28–48 (IYAI…VHSL) and 54–74 (TLIT…WATT). Residues Asp142 and Asp447 contribute to the active site. The next 5 helical transmembrane spans lie at 530–550 (IPLT…VSVF), 558–578 (FWLY…DFLL), 593–613 (LMIK…LKTL), 656–676 (VAIV…FCGG), and 680–700 (LELM…GAMV).

It belongs to the glycosyltransferase 2 family. Plant cellulose synthase-like G subfamily. Expressed in young seedlings, primarily in the vascular tissue.

Its subcellular location is the golgi apparatus membrane. Its function is as follows. Thought to be a Golgi-localized beta-glycan synthase that polymerize the backbones of noncellulosic polysaccharides (hemicelluloses) of plant cell wall. In Arabidopsis thaliana (Mouse-ear cress), this protein is Cellulose synthase-like protein G1 (CSLG1).